The following is a 32-amino-acid chain: Zinc metalloproteinase carinactivase-1 catalytic subunit (32 aa).

The Peptidase M12B domain occupies 10 to 32 (FIKLVIVVDHSMVXKXNNDLIAI).

This sequence belongs to the venom metalloproteinase (M12B) family. P-III subfamily. P-IIId sub-subfamily. As to quaternary structure, heterodimer of a metalloproteinase subunit and a regulatory subunit comprising two disulfide-linked lectins (14 kDa and 17 kDa chains) (AC Q9PRP7 and AC Q9PRP8). Zn(2+) serves as cofactor. In terms of tissue distribution, expressed by the venom gland.

Its subcellular location is the secreted. In terms of biological role, calcium-dependent prothrombin (F2) activator. This protein may activate prothrombin via recognition by the regulatory subunit of the calcium ion bound conformation of its gamma-carboxyglutamic acid (GLA) domain, and the subsequent conversion of prothrombin to active thrombin is catalyzed by the catalytic subunit. In Echis carinatus (Saw-scaled viper), this protein is Zinc metalloproteinase carinactivase-1 catalytic subunit.